Here is a 117-residue protein sequence, read N- to C-terminus: UPF0102 protein FTF0898c (117 aa).

It belongs to the UPF0102 family.

In Francisella tularensis subsp. tularensis (strain FSC 198), this protein is UPF0102 protein FTF0898c.